Here is a 73-residue protein sequence, read N- to C-terminus: Conotoxin Gla(3)-TxVI (73 aa).

Residues 1–19 (MQKLIILLLVAAVLMSAQA) form the signal peptide. The propeptide occupies 20 to 44 (VLQEKRPKEKIKFLSKRKTDAEKQQ). 3 cysteine pairs are disulfide-bonded: cysteine 48/cysteine 62, cysteine 55/cysteine 66, and cysteine 61/cysteine 71. A 4-hydroxyproline modification is found at proline 49. Glutamate 53 carries the post-translational modification 4-carboxyglutamate; partial. Proline 54 carries the post-translational modification 4-hydroxyproline. Position 60 is a 4-carboxyglutamate (glutamate 60). The residue at position 64 (tryptophan 64) is a 6'-bromotryptophan.

The protein belongs to the conotoxin O2 superfamily. In terms of tissue distribution, expressed by the venom duct.

The protein localises to the secreted. The protein is Conotoxin Gla(3)-TxVI of Conus textile (Cloth-of-gold cone).